The primary structure comprises 484 residues: uncharacterized protein (484 aa).

A run of 12 helical transmembrane segments spans residues 19-39, 78-98, 110-130, 134-154, 165-185, 199-219, 249-269, 289-309, 321-341, 360-380, 398-418, and 440-460; these read LSFG…MIFV, VNWG…WLIV, LFFM…GFII, IFAI…SNYL, FSPF…AGII, IVFL…IILG, TWYW…PFTF, ISVF…TIGL, ISTI…VFVL, LFLF…GVML, FGLI…ITSL, and LGAY…LALL.

Its subcellular location is the cell membrane. This is an uncharacterized protein from Mesomycoplasma hyopneumoniae (strain J / ATCC 25934 / NCTC 10110) (Mycoplasma hyopneumoniae).